A 941-amino-acid chain; its full sequence is HMG box transcription factor BBX (941 aa).

Residues 1–18 (MKGSNRNKDHSAEGEGVG) show a composition bias toward basic and acidic residues. Disordered regions lie at residues 1-21 (MKGS…GKRP), 39-80 (FSEE…EQRA), 157-200 (VKSP…FGMA), and 221-242 (TPEV…LRQK). Composition is skewed to acidic residues over residues 39-52 (FSEE…EEDI) and 63-75 (LEQD…DDES). Positions 80 to 148 (ARRPMNAFLL…AFMKANPGYK (69 aa)) form a DNA-binding region, HMG box. The span at 177–191 (SSRDLPSPKKAKTEE) shows a compositional bias: basic and acidic residues. The residue at position 243 (serine 243) is a Phosphoserine. Residues 326–370 (GRIKELEKGKEEKEIKMEKTDETRLQKEAEFEKSAKENLRDSKEL) adopt a coiled-coil conformation. Lysine 385 is covalently cross-linked (Glycyl lysine isopeptide (Lys-Gly) (interchain with G-Cter in SUMO2)). Residues 438–482 (IEDPAALNKPEKLKKKKKKSKMDRHGNDKSTPKKTCKKRQSSESD) are disordered. Residues 449–459 (KLKKKKKKSKM) show a composition bias toward basic residues. Residues serine 478 and serine 485 each carry the phosphoserine modification. 2 stretches are compositionally biased toward basic and acidic residues: residues 499 to 508 (GIEKLGDTPR) and 536 to 552 (KKMS…ESRP). Disordered stretches follow at residues 499–600 (GIEK…SDCH) and 635–677 (NVDR…KKTK). Lysine 573 is covalently cross-linked (Glycyl lysine isopeptide (Lys-Gly) (interchain with G-Cter in SUMO2)). Residues 661–670 (TFSQSGTSGS) show a composition bias toward low complexity. Lysine 696 is covalently cross-linked (Glycyl lysine isopeptide (Lys-Gly) (interchain with G-Cter in SUMO2)). Phosphoserine is present on serine 704. Disordered regions lie at residues 714–771 (PVPR…DKWS), 803–888 (IPSI…SSTP), and 912–941 (HRGQ…CADQ). Over residues 723-742 (GNVSSEPTKTSKGPFQSQKK) the composition is skewed to polar residues. Basic residues predominate over residues 743 to 757 (NLFHKIVSKYKHKKE). Basic and acidic residues predominate over residues 758–771 (KPNVPEKGSGDKWS). Positions 805–817 (SIFNTPEPTTTQE) are enriched in polar residues. A Phosphoserine modification is found at serine 822. Over residues 823–834 (QKRKARKTKITH) the composition is skewed to basic residues. Serine 844 bears the Phosphoserine mark. Over residues 866-882 (TETDCNDKCSHNTEVGE) the composition is skewed to basic and acidic residues.

It is found in the nucleus. Functionally, transcription factor that is necessary for cell cycle progression from G1 to S phase. This chain is HMG box transcription factor BBX (BBX), found in Homo sapiens (Human).